Here is a 307-residue protein sequence, read N- to C-terminus: Ornithine carbamoyltransferase (307 aa).

Carbamoyl phosphate is bound by residues 53–56, glutamine 80, arginine 104, and 131–134; these read STRT and HPCQ. L-ornithine-binding positions include asparagine 162, aspartate 220, and 224–225; that span reads SM. Carbamoyl phosphate contacts are provided by residues 260–261 and arginine 288; that span reads CL.

The protein belongs to the aspartate/ornithine carbamoyltransferase superfamily. OTCase family.

It is found in the cytoplasm. The enzyme catalyses carbamoyl phosphate + L-ornithine = L-citrulline + phosphate + H(+). It participates in amino-acid biosynthesis; L-arginine biosynthesis; L-arginine from L-ornithine and carbamoyl phosphate: step 1/3. In terms of biological role, reversibly catalyzes the transfer of the carbamoyl group from carbamoyl phosphate (CP) to the N(epsilon) atom of ornithine (ORN) to produce L-citrulline. The sequence is that of Ornithine carbamoyltransferase from Nitrosomonas europaea (strain ATCC 19718 / CIP 103999 / KCTC 2705 / NBRC 14298).